A 465-amino-acid polypeptide reads, in one-letter code: Antithrombin-III (465 aa).

The N-terminal stretch at 1-32 is a signal peptide; sequence MYSPGAGSGAAGERKLCLLSLLLIGALGCAIC. Cystine bridges form between C41–C161 and C54–C128. T64 is subject to Phosphothreonine. S69 bears the Phosphoserine mark. W82 contacts heparin. The N-linked (GlcNAc...) asparagine glycan is linked to N129. R162 is a binding site for heparin. An N-linked (GlcNAc...) asparagine glycan is attached at N168. R178 contributes to the heparin binding site. 2 N-linked (GlcNAc...) asparagine glycosylation sites follow: N188 and N225. C280 and C463 are oxidised to a cystine.

The protein belongs to the serpin family. Forms protease inhibiting heterodimer with TMPRSS7. In terms of processing, phosphorylated by FAM20C in the extracellular medium. In terms of tissue distribution, plasma.

Its subcellular location is the secreted. It is found in the extracellular space. Its function is as follows. Most important serine protease inhibitor in plasma that regulates the blood coagulation cascade. AT-III inhibits thrombin, matriptase-3/TMPRSS7, as well as factors IXa, Xa and XIa. Its inhibitory activity is greatly enhanced in the presence of heparin. This is Antithrombin-III (Serpinc1) from Mus musculus (Mouse).